A 214-amino-acid chain; its full sequence is Putative AgrB-like protein (214 aa).

5 helical membrane passes run 41–61 (IISV…LIFL), 82–102 (CTLL…SSFF), 109–129 (IIVF…FKFA), 154–174 (ILTI…NLGW), and 182–202 (LSII…GNIL).

It belongs to the AgrB family.

It localises to the cell membrane. In terms of biological role, may be involved in the proteolytic processing of a quorum sensing system signal molecule precursor. The protein is Putative AgrB-like protein of Clostridium perfringens (strain SM101 / Type A).